The primary structure comprises 396 residues: Methylthioribose kinase (396 aa).

Residues N44, K61, and 115–117 (EDL) contribute to the ATP site. D233 provides a ligand contact to substrate. 250–252 (DPE) provides a ligand contact to ATP. R340 contributes to the substrate binding site.

The protein belongs to the methylthioribose kinase family. Homodimer.

The enzyme catalyses 5-(methylsulfanyl)-D-ribose + ATP = 5-(methylsulfanyl)-alpha-D-ribose 1-phosphate + ADP + H(+). The protein operates within amino-acid biosynthesis; L-methionine biosynthesis via salvage pathway; S-methyl-5-thio-alpha-D-ribose 1-phosphate from S-methyl-5'-thioadenosine (hydrolase route): step 2/2. In terms of biological role, catalyzes the phosphorylation of methylthioribose into methylthioribose-1-phosphate. The protein is Methylthioribose kinase of Geobacillus thermodenitrificans (strain NG80-2).